The primary structure comprises 25 residues: Gamma-conotoxin PiVIIA (25 aa).

3 disulfides stabilise this stretch: Cys-1-Cys-15, Cys-8-Cys-19, and Cys-14-Cys-24. Residue Pro-4 is modified to 4-hydroxyproline. Residues Glu-13 and Glu-20 each carry the 4-carboxyglutamate modification.

Belongs to the conotoxin O2 superfamily. Expressed by the venom duct.

Its subcellular location is the secreted. Functionally, micromolar concentrations of PiVIIA increase the magnitude of the macroscopic calcium current in DRG neurons from rat. An increase, even modest of the calcium current, may have a significant impact in the excitability and electrical activity of neurons, and may set up PiVIIA as a member of the pharmacological family of the gamma-conotoxins. In Conus princeps (Prince cone), this protein is Gamma-conotoxin PiVIIA.